Reading from the N-terminus, the 154-residue chain is Myoglobin (154 aa).

Residues 2–148 form the Globin domain; it reads GLSDGEWQLV…FRKDIAAKYK (147 aa). Position 4 is a phosphoserine (Ser4). His65 contributes to the nitrite binding site. His65 lines the O2 pocket. A Phosphothreonine modification is found at Thr68. His94 contributes to the heme b binding site.

It belongs to the globin family. Monomeric.

It localises to the cytoplasm. Its subcellular location is the sarcoplasm. It catalyses the reaction Fe(III)-heme b-[protein] + nitric oxide + H2O = Fe(II)-heme b-[protein] + nitrite + 2 H(+). The catalysed reaction is H2O2 + AH2 = A + 2 H2O. In terms of biological role, monomeric heme protein which primary function is to store oxygen and facilitate its diffusion within muscle tissues. Reversibly binds oxygen through a pentacoordinated heme iron and enables its timely and efficient release as needed during periods of heightened demand. Depending on the oxidative conditions of tissues and cells, and in addition to its ability to bind oxygen, it also has a nitrite reductase activity whereby it regulates the production of bioactive nitric oxide. Under stress conditions, like hypoxia and anoxia, it also protects cells against reactive oxygen species thanks to its pseudoperoxidase activity. In Castor fiber (Eurasian beaver), this protein is Myoglobin (MB).